The chain runs to 404 residues: Inosine-5'-monophosphate dehydrogenase (404 aa).

NAD(+)-binding positions include D172 and G222–G224. K(+) is bound by residues G224 and G226. S227 provides a ligand contact to IMP. C229 contributes to the K(+) binding site. The active-site Thioimidate intermediate is C229. IMP is bound by residues D262–G264, G285–N286, and Y309–G313. R325 serves as the catalytic Proton acceptor. Residue E340 participates in IMP binding. K(+) contacts are provided by E394, S395, and H396.

This sequence belongs to the IMPDH/GMPR family. As to quaternary structure, homotetramer. It depends on K(+) as a cofactor.

The catalysed reaction is IMP + NAD(+) + H2O = XMP + NADH + H(+). It participates in purine metabolism; XMP biosynthesis via de novo pathway; XMP from IMP: step 1/1. With respect to regulation, mycophenolic acid (MPA) is a non-competitive inhibitor that prevents formation of the closed enzyme conformation by binding to the same site as the amobile flap. In contrast, mizoribine monophosphate (MZP) is a competitive inhibitor that induces the closed conformation. MPA is a potent inhibitor of mammalian IMPDHs but a poor inhibitor of the bacterial enzymes. MZP is a more potent inhibitor of bacterial IMPDH. In terms of biological role, catalyzes the conversion of inosine 5'-phosphate (IMP) to xanthosine 5'-phosphate (XMP), the first committed and rate-limiting step in the de novo synthesis of guanine nucleotides, and therefore plays an important role in the regulation of cell growth. Essential for mouse infection by tick bite and critical for the survival in environments that appear to lack sufficient amounts of guanine, guanosine, and/or deoxyguanosine to support spirochete growth, such as mammalian host tissues. This chain is Inosine-5'-monophosphate dehydrogenase, found in Borreliella burgdorferi (strain ATCC 35210 / DSM 4680 / CIP 102532 / B31) (Borrelia burgdorferi).